The chain runs to 266 residues: Gap junction beta-4 protein (266 aa).

Residues 2–13 lie within the membrane without spanning it; sequence NWAFLQGLLSGV. Residues 14–20 are Cytoplasmic-facing; sequence NKYSTVL. Residues 21–40 form a helical membrane-spanning segment; the sequence is SRIWLSVVFIFRVLVYVVAA. The Extracellular segment spans residues 41 to 73; it reads EEVWDDEQKDFVCNTKQPGCPNVCYDEFFPVSH. 3 disulfides stabilise this stretch: C53–C175, C60–C169, and C64–C164. A helical membrane pass occupies residues 74–94; that stretch reads VRLWALQLILVTCPSLLVVMH. At 95–130 the chain is on the cytoplasmic side; it reads VAYREERERKHHLKHGPNAPSLYDNLSKKRGGLWWT. A helical membrane pass occupies residues 131 to 151; it reads YLLSLIFKAAVDAGFLYIFHR. The Extracellular portion of the chain corresponds to 152–184; the sequence is LYKDYDMPRVVACSVEPCPHTVDCYISRPTEKK. Residues 185-205 traverse the membrane as a helical segment; sequence VFTYFMVTTAAICILLNLSEV. The Cytoplasmic portion of the chain corresponds to 206 to 266; sequence FYLVGKRCME…SAPVDAGGYP (61 aa).

The protein belongs to the connexin family. Beta-type (group I) subfamily. A hemichannel or connexon is composed of a hexamer of connexins. A functional gap junction is formed by the apposition of two hemichannels. Forms heteromeric channels with GJB2.

The protein resides in the cell membrane. The protein localises to the cell junction. It localises to the gap junction. Structural component of gap junctions. Gap junctions are dodecameric channels that connect the cytoplasm of adjoining cells. They are formed by the docking of two hexameric hemichannels, one from each cell membrane. Small molecules and ions diffuse from one cell to a neighboring cell via the central pore. This is Gap junction beta-4 protein (GJB4) from Homo sapiens (Human).